We begin with the raw amino-acid sequence, 132 residues long: Small ribosomal subunit protein uS8 (132 aa).

The protein belongs to the universal ribosomal protein uS8 family. In terms of assembly, part of the 30S ribosomal subunit. Contacts proteins S5 and S12.

In terms of biological role, one of the primary rRNA binding proteins, it binds directly to 16S rRNA central domain where it helps coordinate assembly of the platform of the 30S subunit. The protein is Small ribosomal subunit protein uS8 of Limosilactobacillus fermentum (strain NBRC 3956 / LMG 18251) (Lactobacillus fermentum).